A 280-amino-acid chain; its full sequence is SPX domain-containing protein 2 (280 aa).

The 162-residue stretch at 1-162 (MKFGKSLSSQ…GSMIRLPFVQ (162 aa)) folds into the SPX domain. Disordered regions lie at residues 191 to 244 (PTNE…KSTV) and 257 to 280 (GSST…EPGR).

As to quaternary structure, interacts (via SPX domain) with PHR2 (via C-terminus). Interacts with RLI1 in the nucleus to prevents its positive regulation of leaf inclination during phosphate (Pi) starvation. Predominantly expressed in roots, leaves and seeds. Localized in leaves lamina joints.

The protein localises to the nucleus. Inhibits PHR2 DNA-binding activity via a phosphate (Pi)-dependent protein interaction. Together with SPX1, plays a negative role in the regulation of leaf inclination by preventing RLI1 transcription factor activity in Pi depleted conditions. The sequence is that of SPX domain-containing protein 2 from Oryza sativa subsp. japonica (Rice).